Reading from the N-terminus, the 152-residue chain is Large ribosomal subunit protein bL9 (152 aa).

Belongs to the bacterial ribosomal protein bL9 family.

Binds to the 23S rRNA. The protein is Large ribosomal subunit protein bL9 of Mycobacterium sp. (strain JLS).